The primary structure comprises 58 residues: uncharacterized protein (58 aa).

A helical transmembrane segment spans residues 12-32 (VMTLLITISILIVLAVLLVTI).

The protein localises to the cell membrane. This is an uncharacterized protein from Bacillus subtilis (strain 168).